A 238-amino-acid polypeptide reads, in one-letter code: Small ribosomal subunit protein uS2 (238 aa).

It belongs to the universal ribosomal protein uS2 family.

The protein is Small ribosomal subunit protein uS2 of Actinobacillus pleuropneumoniae serotype 7 (strain AP76).